The sequence spans 159 residues: Cyclic pyranopterin monophosphate synthase (159 aa).

Substrate is bound by residues 75–77 and 113–114; these read LCH and ME. Asp128 is an active-site residue.

It belongs to the MoaC family. In terms of assembly, homohexamer; trimer of dimers.

The catalysed reaction is (8S)-3',8-cyclo-7,8-dihydroguanosine 5'-triphosphate = cyclic pyranopterin phosphate + diphosphate. It participates in cofactor biosynthesis; molybdopterin biosynthesis. Functionally, catalyzes the conversion of (8S)-3',8-cyclo-7,8-dihydroguanosine 5'-triphosphate to cyclic pyranopterin monophosphate (cPMP). The protein is Cyclic pyranopterin monophosphate synthase of Aliivibrio fischeri (strain MJ11) (Vibrio fischeri).